Reading from the N-terminus, the 474-residue chain is tRNA-2-methylthio-N(6)-dimethylallyladenosine synthase (474 aa).

In terms of domain architecture, MTTase N-terminal spans 3–120 (KKLHIKTWGC…LPEMINSVRG (118 aa)). 6 residues coordinate [4Fe-4S] cluster: C12, C49, C83, C157, C161, and C164. Residues 143-375 (RAEGPTAFVS…QERINQQAMA (233 aa)) form the Radical SAM core domain. Residues 378–441 (RRMLGTTQRI…PNSLRGKVVR (64 aa)) enclose the TRAM domain.

Belongs to the methylthiotransferase family. MiaB subfamily. Monomer. The cofactor is [4Fe-4S] cluster.

It localises to the cytoplasm. The catalysed reaction is N(6)-dimethylallyladenosine(37) in tRNA + (sulfur carrier)-SH + AH2 + 2 S-adenosyl-L-methionine = 2-methylsulfanyl-N(6)-dimethylallyladenosine(37) in tRNA + (sulfur carrier)-H + 5'-deoxyadenosine + L-methionine + A + S-adenosyl-L-homocysteine + 2 H(+). Catalyzes the methylthiolation of N6-(dimethylallyl)adenosine (i(6)A), leading to the formation of 2-methylthio-N6-(dimethylallyl)adenosine (ms(2)i(6)A) at position 37 in tRNAs that read codons beginning with uridine. The chain is tRNA-2-methylthio-N(6)-dimethylallyladenosine synthase from Shigella boydii serotype 4 (strain Sb227).